Here is a 616-residue protein sequence, read N- to C-terminus: Chaperone protein HscA (616 aa).

Belongs to the heat shock protein 70 family.

Functionally, chaperone involved in the maturation of iron-sulfur cluster-containing proteins. Has a low intrinsic ATPase activity which is markedly stimulated by HscB. Involved in the maturation of IscU. This is Chaperone protein HscA from Salmonella paratyphi B (strain ATCC BAA-1250 / SPB7).